We begin with the raw amino-acid sequence, 93 residues long: Putative defensin-like protein 283 (93 aa).

Residues 1-24 (MTKIGFYLATYATIYIILSPGLLA) form the signal peptide. Intrachain disulfides connect cysteine 43–cysteine 83, cysteine 66–cysteine 90, and cysteine 72–cysteine 92.

This sequence belongs to the DEFL family.

It localises to the secreted. The chain is Putative defensin-like protein 283 from Arabidopsis thaliana (Mouse-ear cress).